The following is a 134-amino-acid chain: Phosphoribosyl-AMP cyclohydrolase (134 aa).

D93 is a Mg(2+) binding site. C94 contributes to the Zn(2+) binding site. Mg(2+) contacts are provided by D95 and D97. Residues C112 and C119 each coordinate Zn(2+).

Belongs to the PRA-CH family. In terms of assembly, homodimer. Requires Mg(2+) as cofactor. It depends on Zn(2+) as a cofactor.

Its subcellular location is the cytoplasm. The enzyme catalyses 1-(5-phospho-beta-D-ribosyl)-5'-AMP + H2O = 1-(5-phospho-beta-D-ribosyl)-5-[(5-phospho-beta-D-ribosylamino)methylideneamino]imidazole-4-carboxamide. The protein operates within amino-acid biosynthesis; L-histidine biosynthesis; L-histidine from 5-phospho-alpha-D-ribose 1-diphosphate: step 3/9. Its function is as follows. Catalyzes the hydrolysis of the adenine ring of phosphoribosyl-AMP. The polypeptide is Phosphoribosyl-AMP cyclohydrolase (Caulobacter sp. (strain K31)).